Consider the following 126-residue polypeptide: Histone H2B 5 (126 aa).

Over residues 1–12 (MPEPAKSAPAPK) the composition is skewed to low complexity. The disordered stretch occupies residues 1 to 35 (MPEPAKSAPAPKKGSKKAVTKTQKKGDKKRRKSRK). N6-acetyllysine is present on residues Lys-6 and Lys-13. A compositionally biased stretch (basic residues) spans 13–34 (KGSKKAVTKTQKKGDKKRRKSR). At Ser-15 the chain carries Phosphoserine. Lys-16 and Lys-21 each carry N6-acetyllysine. A glycan (O-linked (GlcNAc) serine) is linked at Ser-113. Residue Lys-121 forms a Glycyl lysine isopeptide (Lys-Gly) (interchain with G-Cter in ubiquitin) linkage.

Belongs to the histone H2B family. As to quaternary structure, the nucleosome is a histone octamer containing two molecules each of H2A, H2B, H3 and H4 assembled in one H3-H4 heterotetramer and two H2A-H2B heterodimers. The octamer wraps approximately 147 bp of DNA. Monoubiquitination of Lys-121 by the BRE1 gives a specific tag for epigenetic transcriptional activation and is also prerequisite for histone H3 'Lys-4' and 'Lys-79' methylation. Post-translationally, phosphorylated on Ser-15 during apoptosis; which facilitates apoptotic chromatin condensation. In terms of processing, glcNAcylation at Ser-113 promotes monoubiquitination of Lys-121. It fluctuates in response to extracellular glucose, and associates with transcribed genes.

The protein resides in the nucleus. It is found in the chromosome. In terms of biological role, core component of nucleosome. Nucleosomes wrap and compact DNA into chromatin, limiting DNA accessibility to the cellular machineries which require DNA as a template. Histones thereby play a central role in transcription regulation, DNA repair, DNA replication and chromosomal stability. DNA accessibility is regulated via a complex set of post-translational modifications of histones, also called histone code, and nucleosome remodeling. The sequence is that of Histone H2B 5 (H2B-V) from Gallus gallus (Chicken).